A 174-amino-acid polypeptide reads, in one-letter code: Gamma-crystallin C (174 aa).

2 consecutive Beta/gamma crystallin 'Greek key' domains span residues 2–40 (GKITFFEDRSFQGRCYECSSDCPNLQTYFSRCNSVRVDS) and 41–83 (GCWM…RLIP). Cys-23 bears the S-methylcysteine mark. The tract at residues 84 to 87 (HAGS) is connecting peptide. 2 consecutive Beta/gamma crystallin 'Greek key' domains span residues 88–128 (HRMR…QVLE) and 129–171 (GCWV…RRVV).

It belongs to the beta/gamma-crystallin family.

Crystallins are the dominant structural components of the vertebrate eye lens. This is Gamma-crystallin C (Crygc) from Mus musculus (Mouse).